A 675-amino-acid polypeptide reads, in one-letter code: Probable potassium transport system protein Kup (675 aa).

The segment covering 1–12 has biased composition (basic and acidic residues); sequence MEPAMPEHDGDH. Residues 1-25 form a disordered region; that stretch reads MEPAMPEHDGDHASNPPHGVGIPND. The next 12 helical transmembrane spans lie at 62-82, 104-124, 153-173, 195-215, 222-242, 255-275, 300-320, 332-352, 390-410, 419-439, 450-470, and 472-492; these read ALLAVLGVVYGDIGTSPLYAL, LASLTFWALMLIVTIKYVILI, WLFGLVGIAGTCLFFGDSIIT, IIIPLAMVVLVALFSVQVLGT, FGPIMVCWFSVLAILGIKGIF, FALEFIVLHGYLSFIALGSVV, WLFFVLPSLTLNYFGQAALLI, LLVPHWAQIPMLVLATFATVI, IYLPSLNWILAFGALVLVLAF, AYGIAVTGTFLCTCVLAMVVF, VAIVFGFFFIVDSIFFSANVL, and IPDGGWVPLAIGIISTIIMTT.

It belongs to the HAK/KUP transporter (TC 2.A.72) family.

It is found in the cell inner membrane. The catalysed reaction is K(+)(in) + H(+)(in) = K(+)(out) + H(+)(out). Its function is as follows. Transport of potassium into the cell. Likely operates as a K(+):H(+) symporter. The protein is Probable potassium transport system protein Kup of Gluconobacter oxydans (strain 621H) (Gluconobacter suboxydans).